The chain runs to 364 residues: UDP-N-acetylglucosamine--N-acetylmuramyl-(pentapeptide) pyrophosphoryl-undecaprenol N-acetylglucosamine transferase (364 aa).

Residues Thr10 to Gly12, Asn128, Arg170, Ser199, Ile250, and Gln295 contribute to the UDP-N-acetyl-alpha-D-glucosamine site.

The protein belongs to the glycosyltransferase 28 family. MurG subfamily.

The protein localises to the cell inner membrane. The catalysed reaction is di-trans,octa-cis-undecaprenyl diphospho-N-acetyl-alpha-D-muramoyl-L-alanyl-D-glutamyl-meso-2,6-diaminopimeloyl-D-alanyl-D-alanine + UDP-N-acetyl-alpha-D-glucosamine = di-trans,octa-cis-undecaprenyl diphospho-[N-acetyl-alpha-D-glucosaminyl-(1-&gt;4)]-N-acetyl-alpha-D-muramoyl-L-alanyl-D-glutamyl-meso-2,6-diaminopimeloyl-D-alanyl-D-alanine + UDP + H(+). Its pathway is cell wall biogenesis; peptidoglycan biosynthesis. In terms of biological role, cell wall formation. Catalyzes the transfer of a GlcNAc subunit on undecaprenyl-pyrophosphoryl-MurNAc-pentapeptide (lipid intermediate I) to form undecaprenyl-pyrophosphoryl-MurNAc-(pentapeptide)GlcNAc (lipid intermediate II). The sequence is that of UDP-N-acetylglucosamine--N-acetylmuramyl-(pentapeptide) pyrophosphoryl-undecaprenol N-acetylglucosamine transferase from Chlorobium phaeobacteroides (strain DSM 266 / SMG 266 / 2430).